The sequence spans 164 residues: Prolyl-tRNA editing protein ProX (164 aa).

This sequence belongs to the PRORSD1 family.

It localises to the cytoplasm. Its function is as follows. Functions in trans to edit the amino acid moiety from incorrectly charged Ala-tRNA(Pro). Has weak activity on correctly charged tRNA(Ala), tRNA(Gly) as well as tRNA(Cys), tRNA(Met), tRNA(Pro), tRNA(Ser) and tRNA(Leu). This is Prolyl-tRNA editing protein ProX (proX) from Acetoanaerobium sticklandii (strain ATCC 12662 / DSM 519 / JCM 1433 / CCUG 9281 / NCIMB 10654 / HF) (Clostridium sticklandii).